The chain runs to 96 residues: Putative pterin-4-alpha-carbinolamine dehydratase (96 aa).

The protein belongs to the pterin-4-alpha-carbinolamine dehydratase family.

The enzyme catalyses (4aS,6R)-4a-hydroxy-L-erythro-5,6,7,8-tetrahydrobiopterin = (6R)-L-erythro-6,7-dihydrobiopterin + H2O. The chain is Putative pterin-4-alpha-carbinolamine dehydratase from Synechocystis sp. (strain ATCC 27184 / PCC 6803 / Kazusa).